An 883-amino-acid polypeptide reads, in one-letter code: Pyruvate, phosphate dikinase 2 (883 aa).

The disordered stretch occupies residues 1 to 21; sequence MAPAPCGRSSQRVFHFGKGKS. H465 acts as the Tele-phosphohistidine intermediate in catalysis. Residues R571, R628, E757, G778, T779, N780, and D781 each contribute to the substrate site. E757 lines the Mg(2+) pocket. D781 is a binding site for Mg(2+). C843 serves as the catalytic Proton donor.

The protein belongs to the PEP-utilizing enzyme family. Mg(2+) is required as a cofactor. In terms of tissue distribution, expressed in leaves, roots and stems.

It localises to the cytoplasm. It catalyses the reaction pyruvate + phosphate + ATP = phosphoenolpyruvate + AMP + diphosphate + H(+). Functionally, formation of phosphoenolpyruvate, which is the primary acceptor of CO(2) in C4 and some Crassulacean acid metabolism plants. The chain is Pyruvate, phosphate dikinase 2 from Zea mays (Maize).